A 345-amino-acid polypeptide reads, in one-letter code: DNA N(6)-methyladenine demethylase ALKBH1A (345 aa).

Substrate is bound by residues W179 and 186-188 (FDW). The Fe2OG dioxygenase domain maps to 225–345 (RPEGAIVNYF…RININIRQVF (121 aa)). Residue 232–234 (NYF) participates in 2-oxoglutarate binding. Residues H243, D245, and H299 each coordinate Fe cation. 336–342 (RININIR) lines the 2-oxoglutarate pocket.

Belongs to the alkB family. Requires Fe(2+) as cofactor. Mostly expressed in siliques, to a lower extent in roots, seedlings and rosette leaves, but barely in cauline leaves, stems and flowers.

The protein localises to the nucleus. Its subcellular location is the cytoplasm. It catalyses the reaction an N(6)-methyl-2'-deoxyadenosine in DNA + 2-oxoglutarate + O2 = a 2'-deoxyadenosine in DNA + formaldehyde + succinate + CO2. Dioxygenase that catalyzes DNA N(6)-methyladenine (6 mA) demethylation to modulate gene expression and regulate seed germination. This is DNA N(6)-methyladenine demethylase ALKBH1A from Arabidopsis thaliana (Mouse-ear cress).